Here is a 333-residue protein sequence, read N- to C-terminus: Phenylalanine--tRNA ligase alpha subunit (333 aa).

Glutamate 254 is a binding site for Mg(2+).

The protein belongs to the class-II aminoacyl-tRNA synthetase family. Phe-tRNA synthetase alpha subunit type 1 subfamily. As to quaternary structure, tetramer of two alpha and two beta subunits. It depends on Mg(2+) as a cofactor.

It is found in the cytoplasm. It carries out the reaction tRNA(Phe) + L-phenylalanine + ATP = L-phenylalanyl-tRNA(Phe) + AMP + diphosphate + H(+). In Xylella fastidiosa (strain M23), this protein is Phenylalanine--tRNA ligase alpha subunit.